The chain runs to 156 residues: ATP synthase subunit b (156 aa).

A helical membrane pass occupies residues 7–29 (LFGQTVAFILFVWFCMKFVWPPL).

The protein belongs to the ATPase B chain family. In terms of assembly, F-type ATPases have 2 components, F(1) - the catalytic core - and F(0) - the membrane proton channel. F(1) has five subunits: alpha(3), beta(3), gamma(1), delta(1), epsilon(1). F(0) has three main subunits: a(1), b(2) and c(10-14). The alpha and beta chains form an alternating ring which encloses part of the gamma chain. F(1) is attached to F(0) by a central stalk formed by the gamma and epsilon chains, while a peripheral stalk is formed by the delta and b chains.

The protein resides in the cell inner membrane. Its function is as follows. F(1)F(0) ATP synthase produces ATP from ADP in the presence of a proton or sodium gradient. F-type ATPases consist of two structural domains, F(1) containing the extramembraneous catalytic core and F(0) containing the membrane proton channel, linked together by a central stalk and a peripheral stalk. During catalysis, ATP synthesis in the catalytic domain of F(1) is coupled via a rotary mechanism of the central stalk subunits to proton translocation. Functionally, component of the F(0) channel, it forms part of the peripheral stalk, linking F(1) to F(0). The chain is ATP synthase subunit b from Shewanella frigidimarina (strain NCIMB 400).